We begin with the raw amino-acid sequence, 425 residues long: UPF0229 protein SG1344 (425 aa).

The interval 49–109 is disordered; that stretch reads GESVSIPNTD…GQGSVSQDGE (61 aa). Over residues 50 to 59 the composition is skewed to polar residues; that stretch reads ESVSIPNTDI. Residues 77–90 are compositionally biased toward basic and acidic residues; the sequence is PGNDHFVQNDRIER.

It belongs to the UPF0229 family.

In Sodalis glossinidius (strain morsitans), this protein is UPF0229 protein SG1344.